Reading from the N-terminus, the 417-residue chain is NADH-quinone oxidoreductase subunit D (417 aa).

Belongs to the complex I 49 kDa subunit family. NDH-1 is composed of 14 different subunits. Subunits NuoB, C, D, E, F, and G constitute the peripheral sector of the complex.

Its subcellular location is the cell inner membrane. The catalysed reaction is a quinone + NADH + 5 H(+)(in) = a quinol + NAD(+) + 4 H(+)(out). NDH-1 shuttles electrons from NADH, via FMN and iron-sulfur (Fe-S) centers, to quinones in the respiratory chain. The immediate electron acceptor for the enzyme in this species is believed to be ubiquinone. Couples the redox reaction to proton translocation (for every two electrons transferred, four hydrogen ions are translocated across the cytoplasmic membrane), and thus conserves the redox energy in a proton gradient. The chain is NADH-quinone oxidoreductase subunit D from Francisella tularensis subsp. holarctica (strain FTNF002-00 / FTA).